Reading from the N-terminus, the 230-residue chain is uncharacterized protein (230 aa).

The next 7 helical transmembrane spans lie at 34-54 (FFAGSLLLATIGALLGLMNFQ), 56-76 (VVQYKWVFFIAEIAAFFGLMF), 87-107 (MLFAFTSLSGVTLVPLLGMVI), 111-131 (GLGAIWQALGMTTIVFGLMSV), 146-166 (MLFIALIVVVVCSLINLFLGS), 167-187 (PMFQVVIAGASAILFSLYIAY), and 205-225 (VSLYLDFLNVFISILQIIGIF).

It belongs to the BI1 family.

The protein localises to the cell membrane. This is an uncharacterized protein from Helicobacter pylori (strain ATCC 700392 / 26695) (Campylobacter pylori).